The sequence spans 66 residues: Large ribosomal subunit protein bL35 (66 aa).

The disordered stretch occupies residues 20–40; sequence GKIKSTQSAKRHGMTKRSKRS. A compositionally biased stretch (basic residues) spans 28–40; the sequence is AKRHGMTKRSKRS.

This sequence belongs to the bacterial ribosomal protein bL35 family.

This is Large ribosomal subunit protein bL35 from Ehrlichia chaffeensis (strain ATCC CRL-10679 / Arkansas).